We begin with the raw amino-acid sequence, 612 residues long: MPQLRSATSTTGRNMAGARALWRATGMGSEDFGKPIVAIANSFTQFVPGHVHLKNMGELVASAVQEAGGVAKEFNTIAVDDGIAMGHDGMLYSLPSRDIIADSVEYMVNAHCADALVCISNCDKITPGMLMAALRLNIPVVFVSGGPMESGEGVEGVVEHRVDLVDAMSLAVDESVTDAQLAQIEENACPTCGSCSGMFTANSMNCLTEALGLSLPGNGTTLATHVNRKRLFLEAGRRAVESAKKYYEQDDESVLPRSIATKAAFENAMALDIAMGGSTNTVLHILAAAQEAEVDFNLSDIDALSRQVPCLAKVAPNSTTFHIEHVHRAGGIPAILGELRRGGLLNEDVHTVHSQTMGEWLDEWDIRSGKASDAAKEFFLAAPGGVRTTQAFSQANEYEDHDVDAAGGCIRSVEHAYTKEGGLCVLFGNIAEDGAVIKTAGIDPELFHFTGRAFVVESQDEAVHEILSKNVKEGDIVVIAYEGPKGGPGMQEMLYPTSYLKGLGLGKKCALITDGRFSGGTSGLSIGHISPEAAAGGAVGLVQHGDEIEIDVENRVLRVNVDDAELARRRQEKGDAPWKPTKPRERRVSKALKAYASMVTSADKGAVRVVED.

Residue Asp81 coordinates Mg(2+). Cys122 lines the [2Fe-2S] cluster pocket. Mg(2+)-binding residues include Asp123 and Lys124. The residue at position 124 (Lys124) is an N6-carboxylysine. Position 195 (Cys195) interacts with [2Fe-2S] cluster. Residue Glu492 participates in Mg(2+) binding. The active-site Proton acceptor is Ser518.

This sequence belongs to the IlvD/Edd family. Homodimer. [2Fe-2S] cluster is required as a cofactor. It depends on Mg(2+) as a cofactor.

It carries out the reaction (2R)-2,3-dihydroxy-3-methylbutanoate = 3-methyl-2-oxobutanoate + H2O. The enzyme catalyses (2R,3R)-2,3-dihydroxy-3-methylpentanoate = (S)-3-methyl-2-oxopentanoate + H2O. The protein operates within amino-acid biosynthesis; L-isoleucine biosynthesis; L-isoleucine from 2-oxobutanoate: step 3/4. It functions in the pathway amino-acid biosynthesis; L-valine biosynthesis; L-valine from pyruvate: step 3/4. Functions in the biosynthesis of branched-chain amino acids. Catalyzes the dehydration of (2R,3R)-2,3-dihydroxy-3-methylpentanoate (2,3-dihydroxy-3-methylvalerate) into 2-oxo-3-methylpentanoate (2-oxo-3-methylvalerate) and of (2R)-2,3-dihydroxy-3-methylbutanoate (2,3-dihydroxyisovalerate) into 2-oxo-3-methylbutanoate (2-oxoisovalerate), the penultimate precursor to L-isoleucine and L-valine, respectively. This chain is Dihydroxy-acid dehydratase, found in Kocuria rhizophila (strain ATCC 9341 / DSM 348 / NBRC 103217 / DC2201).